We begin with the raw amino-acid sequence, 1025 residues long: MEPRQKKARFFDSEEDFGPDTKSLIRPGSSHKPGKPASNSLARPTPAPSTFRSDLEAFLGPLSDQRFGLLLAKSKGNVEQAVNIHFDLPEEVQQATSEETAEEAEVSQTTTSGFETTQKPSQNTQVPSRVHTRGGCSTSRFIGSLVVTAWASKSSKGKVKYQDRLVVERQSHDHSKSIRKNPTDNSHVHIRTVSGELLGRISGEHDYSIASLIDSRVCDFEASCVYADHNLSLGSNFVVELKCYLTEEAFQDVAMPLLDSKTAKKREYVFDNSRESHVEKMLRNRQIAIVDLFGKLNLIKENEANADMVKDMLRAKSQPPSSQPPSQNSEDESEPIPTDELDALYKRIEKEDVEQPETEVEGFPLELRRYQKQGLTWMISRETEVSEYFDNDDSGPINPLWTKVDFPGSDEKFYVNFSSGALTLKFPKQERSFSGGILADEMGLGKTISTLAMVYRDRHVGCTLVVAPMSLLWQWEQECERVGLSTYVYHEKGADIDLDELFKTYSPNILITSYHTLVSHYGQIKALGGGLDRNVISETSSHERPKIFTKHFHRIVLDEAHVIKNRNTVSAKACCLLRATNKWALTGTPIHNRLEDLFSILKFLGAAPWNDFIYWRNFITLPFQEGKIVSALMTVQCILEPIVLRRTKNMKQADGSPLVVLPKKTINIEKVALTDQERVIYSYVLARAQTSLQKSEASEAVGRNYLNILTQILRLRQSCCDPALILRPEAEVPTDEQLQIEENESQLKSMIQQYNDDTQTSACEYSSEIIAQLQDQSAPPECPICAEDVTKLAISKCLHMGCVDCLADNVRFQESKKQTPVCCICRQPAALKDIFEVERTGEDCKDIRLKKLSDRPRSSKLVALVSKLKQLPKDAKSVVFSQFTSYLDIIQTELRREKIQAFRFDGTLSRQQRTDVLKAFGLSKGSVLLISLKTGGVGLNLVTANHAFIMDPWWTFAQEAQAIDRIHRMGQTKDVHVTRFIVENSVEEKMLKIQQQKMVLAGTLGMSEQEQKAQRIENIKTLLGE.

Basic and acidic residues predominate over residues 1–12 (MEPRQKKARFFD). Disordered regions lie at residues 1–49 (MEPR…PAPS), 93–133 (QQAT…VHTR), and 314–336 (RAKS…SEPI). Composition is skewed to polar residues over residues 37–49 (ASNS…PAPS) and 113–127 (GFET…TQVP). Positions 317–328 (SQPPSSQPPSQN) are enriched in low complexity. The 181-residue stretch at 427-607 (PKQERSFSGG…FSILKFLGAA (181 aa)) folds into the Helicase ATP-binding domain. Position 440-447 (440-447 (DEMGLGKT)) interacts with ATP. Positions 558–561 (DEAH) match the DEAH box motif. An RING-type zinc finger spans residues 782-826 (CPICAEDVTKLAISKCLHMGCVDCLADNVRFQESKKQTPVCCICR). The Helicase C-terminal domain maps to 860–1012 (KLVALVSKLK…TLGMSEQEQK (153 aa)).

This sequence belongs to the SNF2/RAD54 helicase family.

The protein resides in the cytoplasm. Its subcellular location is the nucleus. Probable helicase, member of the UBC2/RAD6 epistasis group. Functions with DNA repair protein RAD18 in error-free postreplication DNA repair. Involved in the maintenance of wild-type rates of instability of simple repetitive sequences such as poly(GT) repeats. Seems to be involved in maintaining a balance which acts in favor of error-prone non-homologous joining during DNA double-strand breaks repairs. The protein is DNA repair protein RAD5 (RAD5) of Yarrowia lipolytica (strain CLIB 122 / E 150) (Yeast).